A 456-amino-acid polypeptide reads, in one-letter code: MFS-type transporter SLC18B1 (456 aa).

Position 1 is an N-acetylmethionine (Met-1). A disordered region spans residues 1 to 24 (MEALGDLEGPRAPGGDDPAGSAGE). Over 1–33 (MEALGDLEGPRAPGGDDPAGSAGETPGWLSREQ) the chain is Cytoplasmic. The span at 10 to 23 (PRAPGGDDPAGSAG) shows a compositional bias: low complexity. Ser-21 is modified (phosphoserine). A helical membrane pass occupies residues 34 to 54 (VFVLISAASVNLGSMMCYSIL). Over 55-70 (GPFFPKEAEKKGASNT) the chain is Extracellular. A helical transmembrane segment spans residues 71–91 (IIGMIFGCFALFELLASLVFG). Over 92 to 100 (NYLVHIGAK) the chain is Cytoplasmic. Residues 101-121 (FMFVAGMFVSGGVTILFGVLD) form a helical membrane-spanning segment. The Extracellular segment spans residues 122-127 (RVPDGP). The helical transmembrane segment at 128–148 (VFIAMCFLVRVMDAVSFAAAM) threads the bilayer. Topologically, residues 149–161 (TASSSILAKAFPN) are cytoplasmic. The helical transmembrane segment at 162–184 (NVATVLGSLETFSGLGLILGPPV) threads the bilayer. Topologically, residues 185–195 (GGFLYQSFGYE) are extracellular. A helical transmembrane segment spans residues 196–216 (VPFIVLGCVVLLMVPLNMYIL). Topologically, residues 217-230 (PNYESDPGEHSFWK) are cytoplasmic. The helical transmembrane segment at 231 to 251 (LIALPKVGLIAFVINSLSSCF) threads the bilayer. The Extracellular segment spans residues 252-272 (GFLDPTLSLFVLEKFNLPAGY). A helical membrane pass occupies residues 273–293 (VGLVFLGMALSYAISSPLFGL). Topologically, residues 294–304 (LSDKRPPLRKW) are cytoplasmic. Residues 305–325 (LLVFGNLITAGCYMLLGPVPI) traverse the membrane as a helical segment. Residues 326–331 (LHIKSQ) lie on the Extracellular side of the membrane. The helical transmembrane segment at 332 to 352 (LWLLVLILVVSGLSAGMSIIP) threads the bilayer. Residues 353–377 (TFPEILSCAHENGFEEGLSTLGLVS) are Cytoplasmic-facing. The helical transmembrane segment at 378 to 398 (GLFSAMWSIGAFMGPTLGGFL) threads the bilayer. At 399 to 407 (YEKIGFEWA) the chain is on the extracellular side. A helical membrane pass occupies residues 408-428 (AAIQGLWALISGLAMGLFYLL). Topologically, residues 429 to 456 (EYSRRKRSKSQNILSTEEERTTLLPNET) are cytoplasmic. Phosphoserine is present on Ser-438.

It belongs to the major facilitator superfamily. Expressed in various tissues including lung, placenta, adrenal gland, liver, testis, and brain.

It localises to the cytoplasmic vesicle. Its subcellular location is the secretory vesicle membrane. The protein resides in the secretory vesicle. It is found in the synaptic vesicle membrane. It catalyses the reaction spermine(in) + n H(+)(out) = spermine(out) + n H(+)(in). The catalysed reaction is spermidine(in) + n H(+)(out) = spermidine(out) + n H(+)(in). It carries out the reaction serotonin(in) + n H(+)(out) = serotonin(out) + n H(+)(in). Proton-coupled polyamine antiporter involved in the translocation of polyamines from cytosol into secretory vesicles prior to their release via exocytosis. Uses the electrochemical proton gradient generated by a V-type proton-pumping ATPase to couple the efflux of protons with the uptake of a polyamine molecule. Facilitates vesicular storage of spermine and spermidine in astrocytes with an impact on glutamatergic neuronal transmission and memory formation. Upon antigen stimulation, regulates polyamine accumulation and release in mast cell secretory granules, which in turn potentiates mast cell degranulation and histamine secretion. The polypeptide is MFS-type transporter SLC18B1 (Homo sapiens (Human)).